The sequence spans 237 residues: Phosphoribosylaminoimidazole-succinocarboxamide synthase (237 aa).

Belongs to the SAICAR synthetase family.

It catalyses the reaction 5-amino-1-(5-phospho-D-ribosyl)imidazole-4-carboxylate + L-aspartate + ATP = (2S)-2-[5-amino-1-(5-phospho-beta-D-ribosyl)imidazole-4-carboxamido]succinate + ADP + phosphate + 2 H(+). Its pathway is purine metabolism; IMP biosynthesis via de novo pathway; 5-amino-1-(5-phospho-D-ribosyl)imidazole-4-carboxamide from 5-amino-1-(5-phospho-D-ribosyl)imidazole-4-carboxylate: step 1/2. This is Phosphoribosylaminoimidazole-succinocarboxamide synthase from Psychrobacter cryohalolentis (strain ATCC BAA-1226 / DSM 17306 / VKM B-2378 / K5).